Reading from the N-terminus, the 98-residue chain is Aspartyl/glutamyl-tRNA(Asn/Gln) amidotransferase subunit C (98 aa).

Belongs to the GatC family. Heterotrimer of A, B and C subunits.

The catalysed reaction is L-glutamyl-tRNA(Gln) + L-glutamine + ATP + H2O = L-glutaminyl-tRNA(Gln) + L-glutamate + ADP + phosphate + H(+). It catalyses the reaction L-aspartyl-tRNA(Asn) + L-glutamine + ATP + H2O = L-asparaginyl-tRNA(Asn) + L-glutamate + ADP + phosphate + 2 H(+). Allows the formation of correctly charged Asn-tRNA(Asn) or Gln-tRNA(Gln) through the transamidation of misacylated Asp-tRNA(Asn) or Glu-tRNA(Gln) in organisms which lack either or both of asparaginyl-tRNA or glutaminyl-tRNA synthetases. The reaction takes place in the presence of glutamine and ATP through an activated phospho-Asp-tRNA(Asn) or phospho-Glu-tRNA(Gln). The protein is Aspartyl/glutamyl-tRNA(Asn/Gln) amidotransferase subunit C of Arthrobacter sp. (strain FB24).